We begin with the raw amino-acid sequence, 343 residues long: N-acetyl-gamma-glutamyl-phosphate reductase (343 aa).

The active site involves cysteine 149.

It belongs to the NAGSA dehydrogenase family. Type 1 subfamily.

The protein localises to the cytoplasm. The enzyme catalyses N-acetyl-L-glutamate 5-semialdehyde + phosphate + NADP(+) = N-acetyl-L-glutamyl 5-phosphate + NADPH + H(+). It participates in amino-acid biosynthesis; L-arginine biosynthesis; N(2)-acetyl-L-ornithine from L-glutamate: step 3/4. In terms of biological role, catalyzes the NADPH-dependent reduction of N-acetyl-5-glutamyl phosphate to yield N-acetyl-L-glutamate 5-semialdehyde. The sequence is that of N-acetyl-gamma-glutamyl-phosphate reductase from Methanococcus maripaludis (strain C6 / ATCC BAA-1332).